The following is a 51-amino-acid chain: Large ribosomal subunit protein eL39 (51 aa).

It belongs to the eukaryotic ribosomal protein eL39 family.

This is Large ribosomal subunit protein eL39 (rpl39e) from Methanothermobacter thermautotrophicus (strain ATCC 29096 / DSM 1053 / JCM 10044 / NBRC 100330 / Delta H) (Methanobacterium thermoautotrophicum).